Here is a 1562-residue protein sequence, read N- to C-terminus: DNA-directed RNA polymerase subunit beta'' (1562 aa).

Residues 1–22 form a disordered region; the sequence is MVKKKKFKTKNIQNPPFSSQNS. The segment covering 11–22 has biased composition (polar residues); the sequence is NIQNPPFSSQNS. Residues cysteine 275, cysteine 338, cysteine 345, and cysteine 348 each coordinate Zn(2+).

Belongs to the RNA polymerase beta' chain family. RpoC2 subfamily. In terms of assembly, in plastids the minimal PEP RNA polymerase catalytic core is composed of four subunits: alpha, beta, beta', and beta''. When a (nuclear-encoded) sigma factor is associated with the core the holoenzyme is formed, which can initiate transcription. It depends on Zn(2+) as a cofactor.

The protein resides in the plastid. The protein localises to the chloroplast. It carries out the reaction RNA(n) + a ribonucleoside 5'-triphosphate = RNA(n+1) + diphosphate. DNA-dependent RNA polymerase catalyzes the transcription of DNA into RNA using the four ribonucleoside triphosphates as substrates. This is DNA-directed RNA polymerase subunit beta'' from Chlorella vulgaris (Green alga).